The primary structure comprises 659 residues: Beta-galactosidase BgaA (659 aa).

Arginine 103 provides a ligand contact to substrate. Cysteine 107 contributes to the Zn(2+) binding site. Asparagine 141 is a substrate binding site. Glutamate 142 serves as the catalytic Proton donor. Zn(2+)-binding residues include cysteine 148, cysteine 150, and cysteine 153. Glutamate 298 serves as the catalytic Nucleophile. Tryptophan 307 is a substrate binding site.

This sequence belongs to the glycosyl hydrolase 42 family. Dimer.

The catalysed reaction is Hydrolysis of terminal non-reducing beta-D-galactose residues in beta-D-galactosides.. Inhibited by Cu(2+), Hg(2+) and Zn(2+). No effect with Ca(2+), Mg(2+), Mn(2+) or excess EDTA (10 mM). Involved in plant cell wall degradation in cooperation with cellulosome. Hydrolyzes both p-nitrophenyl-alpha-L-arabinopyranoside (pNPAp) and p-nitrophenyl-beta-D-galactopyranoside (pNPGp), with higher activity for pNPAp. Shows hydrolysis activity against p-nitrophenyl-beta-D-fucopyranoside (pNPFp), but not against p-nitrophenyl-alpha-L-arabinofuranoside (pNPAf), o-nitrophenyl-beta-D-galactopyranoside (oNPGp), p-nitrophenyl-beta-D-xylopyranoside (pNPXp), p-nitrophenyl-beta-D-glucopyranoside (pNPGLp), p-nitrophenyl-beta-D-cellobiopyranoside (pNPCp), p-nitrophenyl-beta-lactopyranoside (pNPLp) or p-nitrophenyl-alpha-galactopyranoside (pNPalphaGp). No detectable activity against arabinan or arabinoxylan, but activity against arabinogalactan can be detected. Increases degradation activity of alpha-L-arabinofuranosidase (ArfA) and endo-1,4-beta-xylanase (XynA) when corn fiber gum and corn stem powder are used as substrates. This chain is Beta-galactosidase BgaA (bgaA), found in Clostridium cellulovorans (strain ATCC 35296 / DSM 3052 / OCM 3 / 743B).